We begin with the raw amino-acid sequence, 117 residues long: Cell division protein FtsB (117 aa).

The Cytoplasmic portion of the chain corresponds to 1–6 (MRDWRW). Residues 7–24 (MLLVLALLLGWLQYRFWF) traverse the membrane as a helical segment. Residues 25–117 (GPGNSGEVMM…QVGEHPADVP (93 aa)) are Periplasmic-facing. The stretch at 29–69 (SGEVMMLEAQVTNQERDNEGLQQRNDALAAEVKDLKEGQSA) forms a coiled coil.

This sequence belongs to the FtsB family. Part of a complex composed of FtsB, FtsL and FtsQ.

The protein resides in the cell inner membrane. In terms of biological role, essential cell division protein. May link together the upstream cell division proteins, which are predominantly cytoplasmic, with the downstream cell division proteins, which are predominantly periplasmic. This chain is Cell division protein FtsB, found in Stenotrophomonas maltophilia (strain R551-3).